A 385-amino-acid chain; its full sequence is 8-amino-7-oxononanoate synthase (385 aa).

Arg-21 is a binding site for substrate. Pyridoxal 5'-phosphate is bound at residue Gly-108–Phe-109. His-133 contacts substrate. Residues Ser-179, His-207, and Thr-233 each coordinate pyridoxal 5'-phosphate. Residue Lys-236 is modified to N6-(pyridoxal phosphate)lysine. Thr-352 contacts substrate.

It belongs to the class-II pyridoxal-phosphate-dependent aminotransferase family. BioF subfamily. In terms of assembly, homodimer. Requires pyridoxal 5'-phosphate as cofactor.

It catalyses the reaction 6-carboxyhexanoyl-[ACP] + L-alanine + H(+) = (8S)-8-amino-7-oxononanoate + holo-[ACP] + CO2. It participates in cofactor biosynthesis; biotin biosynthesis. Functionally, catalyzes the decarboxylative condensation of pimeloyl-[acyl-carrier protein] and L-alanine to produce 8-amino-7-oxononanoate (AON), [acyl-carrier protein], and carbon dioxide. In Salmonella arizonae (strain ATCC BAA-731 / CDC346-86 / RSK2980), this protein is 8-amino-7-oxononanoate synthase.